Here is a 309-residue protein sequence, read N- to C-terminus: Protein FdhE (309 aa).

Belongs to the FdhE family.

It localises to the cytoplasm. Its function is as follows. Necessary for formate dehydrogenase activity. The protein is Protein FdhE of Salmonella choleraesuis (strain SC-B67).